Reading from the N-terminus, the 727-residue chain is Rho-related BTB domain-containing protein 2 (727 aa).

Residues 1 to 210 (MDSDMDYERP…DNAIRAALIS (210 aa)) are rho-like. Residues 21–28 (GDNAVGKT), 84–88 (DTFGD), and 140–143 (CQLD) contribute to the GTP site. 2 BTB domains span residues 266-442 (ADVI…DENE) and 500-567 (SDVT…TSSP). Positions 304 to 333 (ELGGPSEPGGTHPEDHQGHSDQHHHHHHHH) are disordered. The segment covering 315-324 (HPEDHQGHSD) has biased composition (basic and acidic residues). A disordered region spans residues 703-727 (FWNSPSSPSSSAASSSSPSSSSAVV). Low complexity predominate over residues 706–727 (SPSSPSSSAASSSSPSSSSAVV).

The protein belongs to the small GTPase superfamily. Rho family. In terms of assembly, interacts with HSP90AA1 and HSP90AB1. Forms a complex with CUL3 and RBX1. Interacts (via BTB 1 domain) with CUL3. Interacts with MSI2. In terms of processing, autoubiquitinated by RHOBTB2-CUL3-RBX1 ubiquitin ligase complex. As to expression, ubiquitous, with highest levels in neural tissues. Expression is also detected in fetal lung, heart, and brain.

Regulator of cell proliferation and apoptosis. It likely functions as a substrate-adapter that recruits key substrates, e.g. MSI2, to CUL3-based ubiquitin ligase complexes for degradation. Required for MSI2 ubiquitination and degradation. This chain is Rho-related BTB domain-containing protein 2 (RHOBTB2), found in Homo sapiens (Human).